The following is a 920-amino-acid chain: Bifunctional aspartokinase/homoserine dehydrogenase 1, chloroplastic (920 aa).

Residues 1 to 21 are disordered; it reads MRSLTVASRHPGAAFSTRRRP. Residues 1–92 constitute a chloroplast transit peptide; it reads MRSLTVASRH…EAIADLPKGD (92 aa). Residues 93 to 341 are aspartokinase; that stretch reads MWSVHKFGGT…VSEAVILSTL (249 aa). The interface stretch occupies residues 342 to 566; that stretch reads SYQEAWEMSY…LSKTTLAVGI (225 aa). ACT domains lie at 416–491 and 497–574; these read VEGT…VIHN and TVGL…LIGR. The segment at 567-920 is homoserine dehydrogenase; the sequence is IGPGLIGRTL…RLSSYLGAPS (354 aa). Residues isoleucine 572 and alanine 601 each coordinate NAD(+). Residue isoleucine 572 coordinates NADP(+). Residue isoleucine 572 participates in NADPH binding. Positions 604, 653, and 677 each coordinate NADP(+). Residue threonine 653 participates in NAD(+) binding. Positions 653 and 677 each coordinate NADPH. Residues glutamate 704, valine 707, alanine 709, and leucine 711 each coordinate Na(+). NADP(+) contacts are provided by glycine 762 and glutamate 765. Positions 765 and 776 each coordinate L-homoserine. Residue lysine 780 is the Proton donor of the active site. Glycine 897 is an NAD(+) binding site. Glycine 897 lines the NADP(+) pocket. Glycine 897 contacts NADPH.

This sequence in the N-terminal section; belongs to the aspartokinase family. It in the C-terminal section; belongs to the homoserine dehydrogenase family. As to quaternary structure, homo- or heterodimer. A metal cation is required as a cofactor.

Its subcellular location is the plastid. The protein localises to the chloroplast. It catalyses the reaction L-homoserine + NADP(+) = L-aspartate 4-semialdehyde + NADPH + H(+). It carries out the reaction L-homoserine + NAD(+) = L-aspartate 4-semialdehyde + NADH + H(+). The enzyme catalyses L-aspartate + ATP = 4-phospho-L-aspartate + ADP. Its pathway is amino-acid biosynthesis; L-lysine biosynthesis via DAP pathway; (S)-tetrahydrodipicolinate from L-aspartate: step 1/4. It functions in the pathway amino-acid biosynthesis; L-methionine biosynthesis via de novo pathway; L-homoserine from L-aspartate: step 1/3. The protein operates within amino-acid biosynthesis; L-methionine biosynthesis via de novo pathway; L-homoserine from L-aspartate: step 3/3. It participates in amino-acid biosynthesis; L-threonine biosynthesis; L-threonine from L-aspartate: step 1/5. Its pathway is amino-acid biosynthesis; L-threonine biosynthesis; L-threonine from L-aspartate: step 3/5. In terms of biological role, bifunctional aspartate kinase and homoserine dehydrogenase that catalyzes the first and the third steps toward the synthesis of lysine, methionine and threonine from aspartate. In Zea mays (Maize), this protein is Bifunctional aspartokinase/homoserine dehydrogenase 1, chloroplastic (AKHSDH1).